The following is a 385-amino-acid chain: Cytochrome b (385 aa).

A run of 4 helical transmembrane segments spans residues 32-52 (LGSL…FMAM), 76-98 (WLLR…MHIA), 113-133 (VWIV…LGYC), and 179-199 (FFAL…MHFM). Heme b contacts are provided by H82 and H96. Heme b contacts are provided by H183 and H197. H202 serves as a coordination point for a ubiquinone. 4 helical membrane-spanning segments follow: residues 225–245 (FIFK…LFVF), 289–309 (LLGV…PITD), 321–341 (LSKF…QIGQ), and 348–368 (FVLM…IIVP).

This sequence belongs to the cytochrome b family. As to quaternary structure, fungal cytochrome b-c1 complex contains 10 subunits; 3 respiratory subunits, 2 core proteins and 5 low-molecular weight proteins. Cytochrome b-c1 complex is a homodimer. Heme b serves as cofactor.

The protein resides in the mitochondrion inner membrane. In terms of biological role, component of the ubiquinol-cytochrome c reductase complex (complex III or cytochrome b-c1 complex) that is part of the mitochondrial respiratory chain. The b-c1 complex mediates electron transfer from ubiquinol to cytochrome c. Contributes to the generation of a proton gradient across the mitochondrial membrane that is then used for ATP synthesis. The sequence is that of Cytochrome b (COB) from Candida glabrata (strain ATCC 2001 / BCRC 20586 / JCM 3761 / NBRC 0622 / NRRL Y-65 / CBS 138) (Yeast).